The primary structure comprises 559 residues: ATP-dependent RNA helicase HAS1 (559 aa).

Positions 1–90 (MAPRSQSKSQ…TSEAEADEPG (90 aa)) are disordered. Composition is skewed to basic and acidic residues over residues 9-22 (SQREPLRKRSREDA) and 55-75 (PDQKQKQKQSKDEKRLQELTK). Positions 93–121 (YSFEKADFSEPTMKAIKEMGFQKMTKVQA) match the Q motif motif. The Helicase ATP-binding domain maps to 124–300 (IPPLLAGRDV…RISLRPGPLY (177 aa)). 137-144 (AKTGSGKT) is a binding site for ATP. The DEAD box motif lies at 247–250 (DEAD). The Helicase C-terminal domain occupies 314–484 (GLEQGYVVCD…NVQSQLTKLI (171 aa)).

This sequence belongs to the DEAD box helicase family. DDX18/HAS1 subfamily. Associates in the nucleolus with the 60S and pre-60S ribosomal subunits.

The protein resides in the nucleus. It is found in the nucleolus. The catalysed reaction is ATP + H2O = ADP + phosphate + H(+). ATP-dependent RNA helicase involved in 40S ribosomal subunit biogenesis. Required for the processing and cleavage of 35S pre-rRNA at sites A0, A1, and A2, leading to mature 18S rRNA. The chain is ATP-dependent RNA helicase HAS1 (HAS1) from Lodderomyces elongisporus (strain ATCC 11503 / CBS 2605 / JCM 1781 / NBRC 1676 / NRRL YB-4239) (Yeast).